We begin with the raw amino-acid sequence, 186 residues long: ATP synthase subunit b (186 aa).

A helical transmembrane segment spans residues 28-48; the sequence is IVWSIIPFAVILFVFWKFVLP.

Belongs to the ATPase B chain family. In terms of assembly, F-type ATPases have 2 components, F(1) - the catalytic core - and F(0) - the membrane proton channel. F(1) has five subunits: alpha(3), beta(3), gamma(1), delta(1), epsilon(1). F(0) has three main subunits: a(1), b(2) and c(10-14). The alpha and beta chains form an alternating ring which encloses part of the gamma chain. F(1) is attached to F(0) by a central stalk formed by the gamma and epsilon chains, while a peripheral stalk is formed by the delta and b chains.

It localises to the cell membrane. Functionally, f(1)F(0) ATP synthase produces ATP from ADP in the presence of a proton or sodium gradient. F-type ATPases consist of two structural domains, F(1) containing the extramembraneous catalytic core and F(0) containing the membrane proton channel, linked together by a central stalk and a peripheral stalk. During catalysis, ATP synthesis in the catalytic domain of F(1) is coupled via a rotary mechanism of the central stalk subunits to proton translocation. Its function is as follows. Component of the F(0) channel, it forms part of the peripheral stalk, linking F(1) to F(0). This is ATP synthase subunit b from Corynebacterium jeikeium (strain K411).